The primary structure comprises 319 residues: Phospho-N-acetylmuramoyl-pentapeptide-transferase (319 aa).

The next 9 membrane-spanning stretches (helical) occupy residues 5–25 (LIAF…LIIW), 51–71 (TMGG…ICAY), 79–99 (VWIL…DDGL), 119–139 (LLVA…FALY), 149–169 (VVLF…AVNL), 173–193 (LDGL…WLAF), 197–217 (NFGV…FFMF), 224–246 (IFMG…IFLG), and 299–319 (VDLV…MIWG).

It belongs to the glycosyltransferase 4 family. MraY subfamily. Mg(2+) serves as cofactor.

It is found in the cell membrane. The enzyme catalyses UDP-N-acetyl-alpha-D-muramoyl-L-alanyl-gamma-D-glutamyl-L-lysyl-D-alanyl-D-alanine + di-trans,octa-cis-undecaprenyl phosphate = Mur2Ac(oyl-L-Ala-gamma-D-Glu-L-Lys-D-Ala-D-Ala)-di-trans,octa-cis-undecaprenyl diphosphate + UMP. It participates in cell wall biogenesis; peptidoglycan biosynthesis. Functionally, catalyzes the initial step of the lipid cycle reactions in the biosynthesis of the cell wall peptidoglycan: transfers peptidoglycan precursor phospho-MurNAc-pentapeptide from UDP-MurNAc-pentapeptide onto the lipid carrier undecaprenyl phosphate, yielding undecaprenyl-pyrophosphoryl-MurNAc-pentapeptide, known as lipid I. This is Phospho-N-acetylmuramoyl-pentapeptide-transferase from Lactobacillus delbrueckii subsp. bulgaricus (strain ATCC BAA-365 / Lb-18).